The primary structure comprises 426 residues: MGRVLVTIFVLFWPIGSFAAINLDRIVAVVNEDIVLESELEQMVRTVQDQLAAQGTSLPPGYVLERQVLERLVMEQLQLQLAARTGIQVGDETLNEALGRIAQDNGLTLSQFRNVLEQDGYDFPAFRENIRKELIISQLHKREVNDRVSVSKAEIDNFLTNQKKRGNQDAQYHLAHILITVPEAASPEQVQAAKAKAEQVLQQLREGADFQKVAVTYSDGQQALEGGDLGWRKMGQLPTLFVDVVPQLQAGDISKLIRSPSGFHIVKLLDYRGEGQQQLVTQTQARHILLRADELASEREVQLRLSQLRQRILSGDDFSELAQAHSDDKASALKGGDLGWVSPGQMIPRFEEAMRSLEPGEISEPFKTQFGWHVVQVLDRRQENMTEEFNRNRAKMEIRQRKVEEELENWLRQLRDEAYVEYRLDN.

A signal peptide spans 1 to 19 (MGRVLVTIFVLFWPIGSFA). 2 consecutive PpiC domains span residues 169–270 (DAQY…KLLD) and 280–379 (VTQT…QVLD).

It is found in the periplasm. It catalyses the reaction [protein]-peptidylproline (omega=180) = [protein]-peptidylproline (omega=0). In terms of biological role, chaperone involved in the correct folding and assembly of outer membrane proteins. Recognizes specific patterns of aromatic residues and the orientation of their side chains, which are found more frequently in integral outer membrane proteins. May act in both early periplasmic and late outer membrane-associated steps of protein maturation. The protein is Chaperone SurA of Nitrosococcus oceani (strain ATCC 19707 / BCRC 17464 / JCM 30415 / NCIMB 11848 / C-107).